The primary structure comprises 311 residues: tRNA pseudouridine synthase B (311 aa).

The Nucleophile role is filled by aspartate 49.

This sequence belongs to the pseudouridine synthase TruB family. Type 1 subfamily.

The catalysed reaction is uridine(55) in tRNA = pseudouridine(55) in tRNA. Responsible for synthesis of pseudouridine from uracil-55 in the psi GC loop of transfer RNAs. This chain is tRNA pseudouridine synthase B, found in Rhizobium meliloti (strain 1021) (Ensifer meliloti).